Here is a 224-residue protein sequence, read N- to C-terminus: Cytidylate kinase (224 aa).

11–19 (GPAAAGKST) serves as a coordination point for ATP.

It belongs to the cytidylate kinase family. Type 1 subfamily.

The protein localises to the cytoplasm. It carries out the reaction CMP + ATP = CDP + ADP. The catalysed reaction is dCMP + ATP = dCDP + ADP. This Geobacillus kaustophilus (strain HTA426) protein is Cytidylate kinase.